A 129-amino-acid polypeptide reads, in one-letter code: uncharacterized protein (129 aa).

Positions 34-57 (SAPLRPPRELHAAPPPATPTQTVV) are disordered.

This is an uncharacterized protein from Homo sapiens (Human).